Here is a 132-residue protein sequence, read N- to C-terminus: Small ribosomal subunit protein uS8 (132 aa).

This sequence belongs to the universal ribosomal protein uS8 family. As to quaternary structure, part of the 30S ribosomal subunit. Contacts proteins S5 and S12.

In terms of biological role, one of the primary rRNA binding proteins, it binds directly to 16S rRNA central domain where it helps coordinate assembly of the platform of the 30S subunit. This chain is Small ribosomal subunit protein uS8, found in Desulforamulus reducens (strain ATCC BAA-1160 / DSM 100696 / MI-1) (Desulfotomaculum reducens).